Reading from the N-terminus, the 363-residue chain is Histidinol-phosphate aminotransferase (363 aa).

K218 is subject to N6-(pyridoxal phosphate)lysine.

This sequence belongs to the class-II pyridoxal-phosphate-dependent aminotransferase family. Histidinol-phosphate aminotransferase subfamily. In terms of assembly, homodimer. Pyridoxal 5'-phosphate is required as a cofactor.

It catalyses the reaction L-histidinol phosphate + 2-oxoglutarate = 3-(imidazol-4-yl)-2-oxopropyl phosphate + L-glutamate. It functions in the pathway amino-acid biosynthesis; L-histidine biosynthesis; L-histidine from 5-phospho-alpha-D-ribose 1-diphosphate: step 7/9. The polypeptide is Histidinol-phosphate aminotransferase (Xanthomonas euvesicatoria pv. vesicatoria (strain 85-10) (Xanthomonas campestris pv. vesicatoria)).